The primary structure comprises 654 residues: tRNA 5-methylaminomethyl-2-thiouridine biosynthesis bifunctional protein MnmC (654 aa).

The interval 1-236 (MSTLLQHAQI…KWEVMHGVYT (236 aa)) is tRNA (mnm(5)s(2)U34)-methyltransferase. Residues 262-654 (IGAGLAGSAT…FALRRLIRGK (393 aa)) are FAD-dependent cmnm(5)s(2)U34 oxidoreductase.

It in the N-terminal section; belongs to the methyltransferase superfamily. tRNA (mnm(5)s(2)U34)-methyltransferase family. In the C-terminal section; belongs to the DAO family. The cofactor is FAD.

It is found in the cytoplasm. The catalysed reaction is 5-aminomethyl-2-thiouridine(34) in tRNA + S-adenosyl-L-methionine = 5-methylaminomethyl-2-thiouridine(34) in tRNA + S-adenosyl-L-homocysteine + H(+). Functionally, catalyzes the last two steps in the biosynthesis of 5-methylaminomethyl-2-thiouridine (mnm(5)s(2)U) at the wobble position (U34) in tRNA. Catalyzes the FAD-dependent demodification of cmnm(5)s(2)U34 to nm(5)s(2)U34, followed by the transfer of a methyl group from S-adenosyl-L-methionine to nm(5)s(2)U34, to form mnm(5)s(2)U34. The protein is tRNA 5-methylaminomethyl-2-thiouridine biosynthesis bifunctional protein MnmC of Pseudomonas entomophila (strain L48).